Here is a 252-residue protein sequence, read N- to C-terminus: 3-deoxy-manno-octulosonate cytidylyltransferase (252 aa).

Belongs to the KdsB family.

The protein localises to the cytoplasm. It carries out the reaction 3-deoxy-alpha-D-manno-oct-2-ulosonate + CTP = CMP-3-deoxy-beta-D-manno-octulosonate + diphosphate. It participates in nucleotide-sugar biosynthesis; CMP-3-deoxy-D-manno-octulosonate biosynthesis; CMP-3-deoxy-D-manno-octulosonate from 3-deoxy-D-manno-octulosonate and CTP: step 1/1. Its pathway is bacterial outer membrane biogenesis; lipopolysaccharide biosynthesis. Activates KDO (a required 8-carbon sugar) for incorporation into bacterial lipopolysaccharide in Gram-negative bacteria. The polypeptide is 3-deoxy-manno-octulosonate cytidylyltransferase (Phocaeicola vulgatus (strain ATCC 8482 / DSM 1447 / JCM 5826 / CCUG 4940 / NBRC 14291 / NCTC 11154) (Bacteroides vulgatus)).